We begin with the raw amino-acid sequence, 352 residues long: Glutamine synthetase cytosolic isozyme (352 aa).

Positions 19–98 constitute a GS beta-grasp domain; it reads FIAEYIWIDA…VMCDTYTPAG (80 aa). Residues 105–352 form the GS catalytic domain; that stretch reads KRCNAAKIFS…TSMIAETTIL (248 aa).

Belongs to the glutamine synthetase family. In terms of assembly, homooctamer.

The protein localises to the cytoplasm. It carries out the reaction L-glutamate + NH4(+) + ATP = L-glutamine + ADP + phosphate + H(+). The protein is Glutamine synthetase cytosolic isozyme (GLN1) of Daucus carota (Wild carrot).